A 165-amino-acid chain; its full sequence is uncharacterized protein (165 aa).

Belongs to the SixA phosphatase family.

This is an uncharacterized protein from Picosynechococcus sp. (strain ATCC 27264 / PCC 7002 / PR-6) (Agmenellum quadruplicatum).